Here is a 490-residue protein sequence, read N- to C-terminus: Argininosuccinate lyase (490 aa).

This sequence belongs to the lyase 1 family. Argininosuccinate lyase subfamily.

Its subcellular location is the cytoplasm. It catalyses the reaction 2-(N(omega)-L-arginino)succinate = fumarate + L-arginine. It functions in the pathway amino-acid biosynthesis; L-arginine biosynthesis; L-arginine from L-ornithine and carbamoyl phosphate: step 3/3. In Bifidobacterium longum (strain DJO10A), this protein is Argininosuccinate lyase.